Consider the following 485-residue polypeptide: Glutamate--tRNA ligase (485 aa).

Residues 11–21 carry the 'HIGH' region motif; that stretch reads PSPTGLLHIGN. Residues 255–259 carry the 'KMSKS' region motif; sequence KLSKR. Position 258 (Lys258) interacts with ATP.

It belongs to the class-I aminoacyl-tRNA synthetase family. Glutamate--tRNA ligase type 1 subfamily. In terms of assembly, monomer.

It localises to the cytoplasm. The enzyme catalyses tRNA(Glu) + L-glutamate + ATP = L-glutamyl-tRNA(Glu) + AMP + diphosphate. Catalyzes the attachment of glutamate to tRNA(Glu) in a two-step reaction: glutamate is first activated by ATP to form Glu-AMP and then transferred to the acceptor end of tRNA(Glu). The protein is Glutamate--tRNA ligase of Streptococcus gordonii (strain Challis / ATCC 35105 / BCRC 15272 / CH1 / DL1 / V288).